The sequence spans 500 residues: MTIFDNYEVWFVIGSQHLYGPETLRQVTQHAEHVVNALNTEAKLPCKLVLKPLGTTPDEITAICRDANYDDRCAGLVVWLHTFSPAKMWINGLTMLNKPLLQFHTQFNAALPWDSIDMDFMNLNQTAHGGREFSFIGARMRQQHAVVTGHWQDKQAHERIGSWMRQAVSKQDTRHLKVCRFGDNMREVAVTDGDKVAAQIKFGFSVNTWAVGDLVQVVNSISDGDVNALVDEYESCYTMTPATQIHGEKRQNVLEAARIELGMKRFLEQGGFHAFTTTFEDLHGLKQLPGLAVQRLMQQGYGFAGEGDWKTAALLRIMKVMSTGLQGGTSFMEDYTYHFEKGNDLVLGSHMLEVCPSIAAEEKPILDVQHLGIGGKDDPARLIFNTQTGPAIVASLIDLGDRYRLLVNCIDTVKTPHSLPKLPVANALWKAQPDLPTASEAWILAGGAHHTVFSHALNLNDMRQFAEMHDIEITVIDNDTRLPAFKDALRWNEVYYGFRR.

E306, E333, H350, and H450 together coordinate Mn(2+).

The protein belongs to the arabinose isomerase family. As to quaternary structure, homohexamer. It depends on Mn(2+) as a cofactor.

It carries out the reaction beta-L-arabinopyranose = L-ribulose. The protein operates within carbohydrate degradation; L-arabinose degradation via L-ribulose; D-xylulose 5-phosphate from L-arabinose (bacterial route): step 1/3. In terms of biological role, catalyzes the conversion of L-arabinose to L-ribulose. The sequence is that of L-arabinose isomerase from Shigella dysenteriae serotype 1 (strain Sd197).